Here is a 686-residue protein sequence, read N- to C-terminus: X-linked interleukin-1 receptor accessory protein-like 2 (686 aa).

The N-terminal stretch at 1–16 (MKLPLLLALVVCSAVS) is a signal peptide. At 17–354 (TNLKMVSKRN…LLRKKDLIYK (338 aa)) the chain is on the extracellular side. Positions 32–132 (IDWSVDLKTY…YCMKVSMSLT (101 aa)) constitute an Ig-like C2-type 1 domain. Residues cysteine 53 and cysteine 116 are joined by a disulfide bond. Asparagine 63, asparagine 120, asparagine 136, asparagine 211, and asparagine 328 each carry an N-linked (GlcNAc...) asparagine glycan. 2 Ig-like C2-type domains span residues 141–232 (CYNS…LKVT) and 239–347 (PPKP…VLLR). Intrachain disulfides connect cysteine 162–cysteine 214 and cysteine 265–cysteine 331. Residues 355–375 (IELAGGLGAIFLLLILLLVVY) form a helical membrane-spanning segment. Topologically, residues 376 to 686 (KCYNIELMLF…KELSFTSDIW (311 aa)) are cytoplasmic. Positions 400–556 (KEYDAYLSYT…KFWKHLVYEM (157 aa)) constitute a TIR domain. Glutamate 488 is a catalytic residue.

This sequence belongs to the interleukin-1 receptor family. Detected in fetal brain after day 12.5, in particular in parts of the diencephalon and in the basal plate of the spinal cord. In postnatal brain detected in cerebral cortex, olfactory bulb, in the CA1 region of the hippocampus and in Purkinje cells of the Xth cerebellar lobule.

Its subcellular location is the membrane. The enzyme catalyses NAD(+) + H2O = ADP-D-ribose + nicotinamide + H(+). The polypeptide is X-linked interleukin-1 receptor accessory protein-like 2 (Il1rapl2) (Mus musculus (Mouse)).